Here is a 70-residue protein sequence, read N- to C-terminus: MRFIVALCLFAIVMCIIHKAEGTYRKPPFNGSIFGKRGVVEYDTTGRALSALCEIASETCQAWYQTLENK.

Positions 1–22 (MRFIVALCLFAIVMCIIHKAEG) are cleaved as a signal peptide. The residue at position 34 (Phe34) is a Phenylalanine amide. A propeptide spanning residues 38-70 (GVVEYDTTGRALSALCEIASETCQAWYQTLENK) is cleaved from the precursor.

In terms of tissue distribution, expressed in antennal lobe (AL) and gnathal ganglion (GNG) with expression detected in most animals (at protein level). Not expressed in corpora cardiaca (CC) and corpora allata (CA) (at protein level).

It is found in the secreted. Functionally, ligand for the neuropeptide SIFamide receptor. In Agrotis ipsilon (Black cutworm moth), this protein is Neuropeptide SIFamide.